Reading from the N-terminus, the 153-residue chain is ORM1-like protein 3 (153 aa).

Residues Met1–Met17 form an important for ceramide level-sensing region. Topologically, residues Met1 to Gly21 are cytoplasmic. Transmembrane regions (helical) follow at residues Ile22–Phe42 and Val43–Phe63. Over Leu64 to Gln94 the chain is Cytoplasmic. The chain crosses the membrane as a helical span at residues Phe95–Thr117. Residues Lys118–Gln121 lie on the Extracellular side of the membrane. The chain crosses the membrane as a helical span at residues Ile122–Leu142. Pro137 bears the Hydroxyproline mark. The Cytoplasmic segment spans residues His143–Tyr153.

It belongs to the ORM family. As to quaternary structure, ceramide-sensitive subunit of the serine palmitoyltransferase (SPT) complex, which is also composed of SPTLC1, SPTLC2/3 and SPTSSA/B. In terms of processing, when hydroxylated at Pro-137, ubiquitinated via 'Lys-48'-linkage, leading to proteasomal degradation. In endothelial cells, ORMDL3 proteasomal degradation is controlled by the sphingosine 1-phosphate receptor signaling pathway.

The protein resides in the endoplasmic reticulum membrane. Functionally, plays an essential role in the homeostatic regulation of sphingolipid de novo biosynthesis by modulating the activity of the serine palmitoyltransferase (SPT) in response to ceramide levels. When complexed to SPT, the binding of ceramides to its N-terminus stabilizes a conformation that block SPT substrate entry, hence preventing SPT catalytic activity. Through this mechanism, maintains ceramide levels at sufficient concentrations for the production of complex sphingolipids, but which prevents the accumulation of ceramides to levels that trigger apoptosis. This Ailuropoda melanoleuca (Giant panda) protein is ORM1-like protein 3 (ORMDL3).